A 470-amino-acid polypeptide reads, in one-letter code: Glutamyl-tRNA reductase (470 aa).

Substrate contacts are provided by residues 49–52 (TCNR), S109, 114–116 (ESQ), and Q120. C50 serves as the catalytic Nucleophile. An NADP(+)-binding site is contributed by 223–228 (GAGAVG).

It belongs to the glutamyl-tRNA reductase family. As to quaternary structure, homodimer.

The catalysed reaction is (S)-4-amino-5-oxopentanoate + tRNA(Glu) + NADP(+) = L-glutamyl-tRNA(Glu) + NADPH + H(+). It functions in the pathway porphyrin-containing compound metabolism; protoporphyrin-IX biosynthesis; 5-aminolevulinate from L-glutamyl-tRNA(Glu): step 1/2. In terms of biological role, catalyzes the NADPH-dependent reduction of glutamyl-tRNA(Glu) to glutamate 1-semialdehyde (GSA). The protein is Glutamyl-tRNA reductase of Frankia alni (strain DSM 45986 / CECT 9034 / ACN14a).